We begin with the raw amino-acid sequence, 287 residues long: ATP synthase gamma chain (287 aa).

Belongs to the ATPase gamma chain family. As to quaternary structure, F-type ATPases have 2 components, CF(1) - the catalytic core - and CF(0) - the membrane proton channel. CF(1) has five subunits: alpha(3), beta(3), gamma(1), delta(1), epsilon(1). CF(0) has three main subunits: a, b and c.

Its subcellular location is the cell inner membrane. Produces ATP from ADP in the presence of a proton gradient across the membrane. The gamma chain is believed to be important in regulating ATPase activity and the flow of protons through the CF(0) complex. The sequence is that of ATP synthase gamma chain from Salmonella paratyphi A (strain ATCC 9150 / SARB42).